Consider the following 206-residue polypeptide: Small ribosomal subunit protein uS4 (206 aa).

One can recognise an S4 RNA-binding domain in the interval Ser96 to Glu157.

The protein belongs to the universal ribosomal protein uS4 family. As to quaternary structure, part of the 30S ribosomal subunit. Contacts protein S5. The interaction surface between S4 and S5 is involved in control of translational fidelity.

One of the primary rRNA binding proteins, it binds directly to 16S rRNA where it nucleates assembly of the body of the 30S subunit. In terms of biological role, with S5 and S12 plays an important role in translational accuracy. The polypeptide is Small ribosomal subunit protein uS4 (Neisseria gonorrhoeae (strain ATCC 700825 / FA 1090)).